Reading from the N-terminus, the 462-residue chain is Chromosomal replication initiator protein DnaA (462 aa).

The tract at residues 1–83 is domain I, interacts with DnaA modulators; that stretch reads MSLSLWQQCL…LRFEVGSKPA (83 aa). The domain II stretch occupies residues 83-125; sequence AVRAHSHPVTASVSAPVAPVTRSAPVRPSWDSSPAQPELSYRS. The segment at 105-127 is disordered; it reads SAPVRPSWDSSPAQPELSYRSNV. Positions 112–127 are enriched in polar residues; sequence WDSSPAQPELSYRSNV. The interval 126–342 is domain III, AAA+ region; it reads NVNPKHTFDN…GALNRVIANA (217 aa). ATP contacts are provided by glycine 170, glycine 172, lysine 173, and threonine 174. Positions 343–462 are domain IV, binds dsDNA; it reads NFTGRAITID…FSNLIRTLSS (120 aa).

Belongs to the DnaA family. In terms of assembly, oligomerizes as a right-handed, spiral filament on DNA at oriC.

It localises to the cytoplasm. Plays an essential role in the initiation and regulation of chromosomal replication. ATP-DnaA binds to the origin of replication (oriC) to initiate formation of the DNA replication initiation complex once per cell cycle. Binds the DnaA box (a 9 base pair repeat at the origin) and separates the double-stranded (ds)DNA. Forms a right-handed helical filament on oriC DNA; dsDNA binds to the exterior of the filament while single-stranded (ss)DNA is stabiized in the filament's interior. The ATP-DnaA-oriC complex binds and stabilizes one strand of the AT-rich DNA unwinding element (DUE), permitting loading of DNA polymerase. After initiation quickly degrades to an ADP-DnaA complex that is not apt for DNA replication. Binds acidic phospholipids. The chain is Chromosomal replication initiator protein DnaA from Yersinia enterocolitica serotype O:8 / biotype 1B (strain NCTC 13174 / 8081).